The chain runs to 549 residues: FERM domain-containing protein 1 (549 aa).

Residues 1–40 (MAVPPRGRGIDPARTNPDTFPPSGARCMEPSPERPACSQQ) are disordered. One can recognise an FERM domain in the interval 54 to 369 (RDVLVLLPSR…DELELDLASR (316 aa)). 2 disordered regions span residues 377-400 (SSQHCPHCLSRHSADSHGSSYTSG) and 422-464 (HGLH…GQSA). Positions 430–443 (SSSPRTSRSHPSTR) are enriched in low complexity. Positions 444 to 462 (GDSQATRQEPCTQVRTRGQ) are enriched in polar residues.

The protein is FERM domain-containing protein 1 (FRMD1) of Homo sapiens (Human).